Reading from the N-terminus, the 372-residue chain is Solute carrier family 35 member F6 (372 aa).

An N-terminal signal peptide occupies residues 1 to 18; that stretch reads MAWTKYQLFLAGLMLVTG. The next 2 membrane-spanning stretches (helical) occupy residues 48 to 68 and 89 to 109; these read FVQAVGMFLGEFSCLAAFYLL and LLFLPPALCDMTGTSIMYVAL. The 56-residue stretch at 105–160 folds into the EamA domain; that stretch reads MYVALNMTSASSFQMLRGAVIIFTGLFSVAFLDRRLAPSQWLGILITIAGLVVVGL. Asn-110 carries an N-linked (GlcNAc...) asparagine glycan. Helical transmembrane passes span 116 to 136, 145 to 165, 176 to 196, 211 to 231, 261 to 281, 293 to 312, and 320 to 336; these read SFQMLRGAVIIFTGLFSVAFL, WLGILITIAGLVVVGLADLLS, VITGDLLIIMAQIIIAIQMVL, AVGIEGFFGFVILSLLLVPMF, LIALALLGNISSIAFFNFSGI, MVLDTLRTIVIWAFTLALGW, and ILGFLILLMGTALYNGL. At Thr-366 the chain carries Phosphothreonine.

Belongs to the SLC35F solute transporter family. As to quaternary structure, interacts with SLC25A5.

The protein resides in the mitochondrion. It is found in the lysosome membrane. Involved in the maintenance of mitochondrial membrane potential in pancreatic ductal adenocarcinoma (PDAC) cells. Promotes pancreatic ductal adenocarcinoma (PDAC) cell growth. May play a role as a nucleotide-sugar transporter. The sequence is that of Solute carrier family 35 member F6 (Slc35f6) from Mus musculus (Mouse).